The chain runs to 305 residues: Catechol 1,2-dioxygenase (305 aa).

Tyrosine 163, tyrosine 197, histidine 221, and histidine 223 together coordinate Fe cation.

Belongs to the intradiol ring-cleavage dioxygenase family. Homodimer. The cofactor is Fe(3+).

It catalyses the reaction catechol + O2 = cis,cis-muconate + 2 H(+). The protein operates within aromatic compound metabolism; beta-ketoadipate pathway; 5-oxo-4,5-dihydro-2-furylacetate from catechol: step 1/3. This Acinetobacter guillouiae (Acinetobacter genomosp. 11) protein is Catechol 1,2-dioxygenase (catA).